We begin with the raw amino-acid sequence, 285 residues long: Energy-coupling factor transporter ATP-binding protein EcfA2 (285 aa).

An ABC transporter domain is found at 3–245 (IKIENLNHIY…VETLEKIGLA (243 aa)). 40-47 (GHTGSGKS) contacts ATP.

This sequence belongs to the ABC transporter superfamily. Energy-coupling factor EcfA family. As to quaternary structure, forms a stable energy-coupling factor (ECF) transporter complex composed of 2 membrane-embedded substrate-binding proteins (S component), 2 ATP-binding proteins (A component) and 2 transmembrane proteins (T component).

It localises to the cell membrane. Its function is as follows. ATP-binding (A) component of a common energy-coupling factor (ECF) ABC-transporter complex. Unlike classic ABC transporters this ECF transporter provides the energy necessary to transport a number of different substrates. This Clostridium perfringens (strain 13 / Type A) protein is Energy-coupling factor transporter ATP-binding protein EcfA2.